The following is a 454-amino-acid chain: Carbon catabolite repressor protein 4 homolog 5 (454 aa).

Residues 1–76 form a disordered region; sequence MSGYERKNTT…SLRRRRRTKE (76 aa). Over residues 31–41 the composition is skewed to basic and acidic residues; sequence VYEKSNRKESI. Positions 61-75 are enriched in basic residues; sequence VRHSKSSLRRRRRTK. Mg(2+) is bound at residue E153.

This sequence belongs to the CCR4/nocturin family. In terms of assembly, component of the CCR4-NOT complex, at least composed of CRR4 and CAF1 proteins. It depends on Mg(2+) as a cofactor.

It is found in the nucleus. It localises to the cytoplasm. It carries out the reaction Exonucleolytic cleavage of poly(A) to 5'-AMP.. In terms of biological role, acts as a catalytic component of the CCR4-NOT core complex, which in the nucleus seems to be a general transcription factor, and in the cytoplasm the major mRNA deadenylase involved in mRNA turnover. This is Carbon catabolite repressor protein 4 homolog 5 (CCR4-5) from Arabidopsis thaliana (Mouse-ear cress).